The following is a 438-amino-acid chain: Coenzyme A disulfide reductase (438 aa).

8–33 lines the FAD pocket; it reads GAVAGGATCASQIRRLDKESDIIIFE. Positions 15, 19, 22, 39, and 42 each coordinate substrate. The active-site Nucleophile is Cys43. The active-site Redox-active is Cys43. Position 71 (Lys71) interacts with substrate. 151 to 166 is an NADP(+) binding site; that stretch reads VLVIGAGYVSLEVLEN. 267–277 is an FAD binding site; the sequence is TNVPNIYAIGD. His299 lines the substrate pocket. An FAD-binding site is contributed by Tyr419. Lys427 lines the substrate pocket.

Belongs to the class-III pyridine nucleotide-disulfide oxidoreductase family. In terms of assembly, homodimer. FAD serves as cofactor.

It carries out the reaction NADP(+) + 2 CoA = CoA-disulfide + NADPH + H(+). Functionally, catalyzes specifically the NADPH-dependent reduction of coenzyme A disulfide. The protein is Coenzyme A disulfide reductase of Staphylococcus aureus (strain Mu3 / ATCC 700698).